Consider the following 1077-residue polypeptide: Error-prone DNA polymerase (1077 aa).

The protein belongs to the DNA polymerase type-C family. DnaE2 subfamily.

It is found in the cytoplasm. The enzyme catalyses DNA(n) + a 2'-deoxyribonucleoside 5'-triphosphate = DNA(n+1) + diphosphate. Its function is as follows. DNA polymerase involved in damage-induced mutagenesis and translesion synthesis (TLS). It is not the major replicative DNA polymerase. The chain is Error-prone DNA polymerase from Brucella abortus biovar 1 (strain 9-941).